Consider the following 303-residue polypeptide: Phosphatidylglycerol--prolipoprotein diacylglyceryl transferase (303 aa).

3 helical membrane passes run 18–38, 50–70, and 106–126; these read LGTL…LIGL, INPG…IFGA, and IWNG…SIIL. Arginine 154 lines the a 1,2-diacyl-sn-glycero-3-phospho-(1'-sn-glycerol) pocket. Helical transmembrane passes span 193 to 213, 223 to 243, and 266 to 286; these read PTFL…IFLF, LPSG…RIWI, and IAQL…WWIY.

This sequence belongs to the Lgt family.

Its subcellular location is the cell inner membrane. It carries out the reaction L-cysteinyl-[prolipoprotein] + a 1,2-diacyl-sn-glycero-3-phospho-(1'-sn-glycerol) = an S-1,2-diacyl-sn-glyceryl-L-cysteinyl-[prolipoprotein] + sn-glycerol 1-phosphate + H(+). Its pathway is protein modification; lipoprotein biosynthesis (diacylglyceryl transfer). In terms of biological role, catalyzes the transfer of the diacylglyceryl group from phosphatidylglycerol to the sulfhydryl group of the N-terminal cysteine of a prolipoprotein, the first step in the formation of mature lipoproteins. This Prochlorococcus marinus (strain SARG / CCMP1375 / SS120) protein is Phosphatidylglycerol--prolipoprotein diacylglyceryl transferase.